Here is a 506-residue protein sequence, read N- to C-terminus: MPPESERKLACLVCRHRKVACDRGRPQCGLCRKNGFDCEYKTREHRPGLRAGYVSQLEKRVEDLERQMEDVLGRLSQSQPSQPATERDDLATTPSTGRLAPPLCVQNVESTNSPQADTAPVETTALTYELQLVWLQKYQPWFPIMHHTSAVKAVAIWDSPGIPWERKQFLSERLRQEVIVNAMGSLHLRTVQALLTLSILFWGEGKWVQYSNLAAMCKRLSQQLGLPTVAGVAAAQPSKMCSLDAVLSDTKIDHEERLRAFWMIEMLDSIFALGLPSYPPTTAAPLGAILPCSDTAWALQDHFGECVPFHDLQYSSGFSMCISLCTVELAPVHQFQHSVIQTGAMAGGPEWQSAAQRLDERLTIWREEFVAAVFRLINAECPHDARAEMRPAVITLLQSQTSLPEGVGQETEPWPYANHRCMYACENMAAKIRRMEESELESCSPCLVLPIFAAARFYIAVAEHRTPALQSALPIEFYDLRYAVAEICHLLQRWVDRYSSPVLRSV.

A DNA-binding region (zn(2)-C6 fungal-type) is located at residues 11–38 (CLVCRHRKVACDRGRPQCGLCRKNGFDC). The tract at residues 73-102 (GRLSQSQPSQPATERDDLATTPSTGRLAPP) is disordered. Residues 75-84 (LSQSQPSQPA) are compositionally biased toward polar residues.

It is found in the nucleus. Transcription factor that probably regulates the expression of the gene cluster that mediates the biosynthesis of notoamide, a fungal indole alkaloid that belongs to a family of natural products containing a characteristic bicyclo[2.2.2]diazaoctane core. The chain is Notoamide biosynthesis cluster transcriptional coactivator notQ' from Aspergillus versicolor.